We begin with the raw amino-acid sequence, 492 residues long: Lysine--tRNA ligase (492 aa).

2 residues coordinate Mg(2+): Glu403 and Glu410.

The protein belongs to the class-II aminoacyl-tRNA synthetase family. As to quaternary structure, homodimer. Mg(2+) serves as cofactor.

The protein resides in the cytoplasm. It catalyses the reaction tRNA(Lys) + L-lysine + ATP = L-lysyl-tRNA(Lys) + AMP + diphosphate. The chain is Lysine--tRNA ligase from Mycoplasmoides gallisepticum (strain R(low / passage 15 / clone 2)) (Mycoplasma gallisepticum).